The chain runs to 318 residues: GPN-loop GTPase 2 (318 aa).

29 to 34 (GSGKST) is a GTP binding site. Positions 85 to 87 (GPN) match the Gly-Pro-Asn (GPN)-loop; involved in dimer interface motif. Residue 187–190 (SKMD) participates in GTP binding.

It belongs to the GPN-loop GTPase family. In terms of assembly, heterodimers with gpn1 or gpn3. Binds to RNA polymerase II (RNAPII).

In terms of biological role, small GTPase required for proper localization of RNA polymerase II and III (RNAPII and RNAPIII). May act at an RNAP assembly step prior to nuclear import. The chain is GPN-loop GTPase 2 from Xenopus laevis (African clawed frog).